The primary structure comprises 588 residues: Adenine deaminase (588 aa).

It belongs to the metallo-dependent hydrolases superfamily. Adenine deaminase family. Homodimer. Mn(2+) is required as a cofactor.

It catalyses the reaction adenine + H2O + H(+) = hypoxanthine + NH4(+). The chain is Adenine deaminase from Escherichia fergusonii (strain ATCC 35469 / DSM 13698 / CCUG 18766 / IAM 14443 / JCM 21226 / LMG 7866 / NBRC 102419 / NCTC 12128 / CDC 0568-73).